Reading from the N-terminus, the 116-residue chain is MSALDPAVASRLKRNADGLFTAVVQERATGQVLMVAWMDDDALARTLETREATYFSRSRGEQWVKGLTSGHTQRVHSVRLDCDGDTVLLEVDQVGGACHTGDHTCFDADLLLGPDL.

Asp-81 lines the Mg(2+) pocket. Cys-82 serves as a coordination point for Zn(2+). Asp-83 and Asp-85 together coordinate Mg(2+). Cys-98 and Cys-105 together coordinate Zn(2+).

The protein belongs to the PRA-CH family. As to quaternary structure, homodimer. Mg(2+) serves as cofactor. The cofactor is Zn(2+).

It localises to the cytoplasm. The catalysed reaction is 1-(5-phospho-beta-D-ribosyl)-5'-AMP + H2O = 1-(5-phospho-beta-D-ribosyl)-5-[(5-phospho-beta-D-ribosylamino)methylideneamino]imidazole-4-carboxamide. Its pathway is amino-acid biosynthesis; L-histidine biosynthesis; L-histidine from 5-phospho-alpha-D-ribose 1-diphosphate: step 3/9. Catalyzes the hydrolysis of the adenine ring of phosphoribosyl-AMP. In Mycolicibacterium vanbaalenii (strain DSM 7251 / JCM 13017 / BCRC 16820 / KCTC 9966 / NRRL B-24157 / PYR-1) (Mycobacterium vanbaalenii), this protein is Phosphoribosyl-AMP cyclohydrolase.